Reading from the N-terminus, the 276-residue chain is Urease accessory protein UreD (276 aa).

It belongs to the UreD family. UreD, UreF and UreG form a complex that acts as a GTP-hydrolysis-dependent molecular chaperone, activating the urease apoprotein by helping to assemble the nickel containing metallocenter of UreC. The UreE protein probably delivers the nickel.

It is found in the cytoplasm. Its function is as follows. Required for maturation of urease via the functional incorporation of the urease nickel metallocenter. In Bradyrhizobium diazoefficiens (strain JCM 10833 / BCRC 13528 / IAM 13628 / NBRC 14792 / USDA 110), this protein is Urease accessory protein UreD.